The following is a 90-amino-acid chain: MMAQSATFYGNQFVGRKMANGQVYNHGRMVAAHPSLPLGTRVRVTNRRTGKSVVVTVSDRCNCSIDLSRSAFQQIANPRKGRVPVSITRL.

The protein to E.coli RlpA.

This is an uncharacterized protein from Synechocystis sp. (strain ATCC 27184 / PCC 6803 / Kazusa).